A 273-amino-acid chain; its full sequence is MPELPEVETVRRGLEKLLLGRTILSLEVKVPKMIKTSYDSFLHDLPGQTIQAMRRRGKYLIFDFGQLIIISHLRMEGKYLLFTDQVPDNKHFHLFFKLDDGSTLVYQDVRKFGTFDLLDRKQEEAYFTRKKLGPEPTKKTFKYVPFERALMHSGKSIKPLLLEQKLVAGLGNIYVDEVLWAAKVHPETPANKLSKAAMKRVHDQTIAILQLGIAKGGSTIRTYRNALGEDGTMQNYLQVYGKTGQPCPRCASMIVKIKLGGRGTHLCPHCQKR.

Pro2 acts as the Schiff-base intermediate with DNA in catalysis. Residue Glu3 is the Proton donor of the active site. Lys58 acts as the Proton donor; for beta-elimination activity in catalysis. Positions 91 and 110 each coordinate DNA. The FPG-type zinc finger occupies 238 to 272 (QVYGKTGQPCPRCASMIVKIKLGGRGTHLCPHCQK). Catalysis depends on Arg262, which acts as the Proton donor; for delta-elimination activity.

It belongs to the FPG family. In terms of assembly, monomer. It depends on Zn(2+) as a cofactor.

It carries out the reaction Hydrolysis of DNA containing ring-opened 7-methylguanine residues, releasing 2,6-diamino-4-hydroxy-5-(N-methyl)formamidopyrimidine.. The enzyme catalyses 2'-deoxyribonucleotide-(2'-deoxyribose 5'-phosphate)-2'-deoxyribonucleotide-DNA = a 3'-end 2'-deoxyribonucleotide-(2,3-dehydro-2,3-deoxyribose 5'-phosphate)-DNA + a 5'-end 5'-phospho-2'-deoxyribonucleoside-DNA + H(+). Its function is as follows. Involved in base excision repair of DNA damaged by oxidation or by mutagenic agents. Acts as a DNA glycosylase that recognizes and removes damaged bases. Has a preference for oxidized purines, such as 7,8-dihydro-8-oxoguanine (8-oxoG). Has AP (apurinic/apyrimidinic) lyase activity and introduces nicks in the DNA strand. Cleaves the DNA backbone by beta-delta elimination to generate a single-strand break at the site of the removed base with both 3'- and 5'-phosphates. The sequence is that of Formamidopyrimidine-DNA glycosylase from Streptococcus thermophilus (strain ATCC BAA-250 / LMG 18311).